The chain runs to 362 residues: Probable cinnamyl alcohol dehydrogenase 8D (362 aa).

Cys-45 provides a ligand contact to Zn(2+). Thr-47 lines the NADP(+) pocket. Zn(2+) contacts are provided by His-67, Glu-68, Cys-98, Cys-101, Cys-104, Cys-112, and Cys-161. Residues Thr-165, 186-191 (GLGGLG), 209-214 (SSSPAK), Thr-249, Gly-273, and 296-298 (NGV) contribute to the NADP(+) site.

It belongs to the zinc-containing alcohol dehydrogenase family. In terms of assembly, homodimer. It depends on Zn(2+) as a cofactor.

It catalyses the reaction (E)-cinnamyl alcohol + NADP(+) = (E)-cinnamaldehyde + NADPH + H(+). The catalysed reaction is (E)-coniferol + NADP(+) = (E)-coniferaldehyde + NADPH + H(+). It carries out the reaction (E)-sinapyl alcohol + NADP(+) = (E)-sinapaldehyde + NADPH + H(+). The enzyme catalyses (E)-4-coumaroyl alcohol + NADP(+) = (E)-4-coumaraldehyde + NADPH + H(+). It catalyses the reaction (E)-caffeyl alcohol + NADP(+) = (E)-caffeyl aldehyde + NADPH + H(+). The protein operates within aromatic compound metabolism; phenylpropanoid biosynthesis. Its function is as follows. Involved in lignin biosynthesis. Catalyzes the final step specific for the production of lignin monomers. Catalyzes the NADPH-dependent reduction of coniferaldehyde, 5-hydroxyconiferaldehyde, sinapaldehyde, 4-coumaraldehyde and caffeyl aldehyde to their respective alcohols. This Oryza sativa subsp. japonica (Rice) protein is Probable cinnamyl alcohol dehydrogenase 8D.